Reading from the N-terminus, the 276-residue chain is MEDQLTIFIISDSLGETAKAIAKACLSQFPGHDDWHFQRFSYINSQERLEQVFEEASQKTVFMMFSLVDVALASYAQKRCESEHYAYVDLLTNVIQGISRISGIDPLGEPGILRRLDNDYFKRVESIEFAVKYDDGRDPRGILQADLVIIGISRTSKTPLSMFLADKNIKVINIPLVPEVPVPKELRMIDSRRIIGLTNSVDHLNQVRKVRLKSLGLSSTANYASLERILEETRYAEEVMKNLGCPIINVSDKAIEETATIILEILKTNGQVAKNL.

Residue 151–158 (GISRTSKT) coordinates ADP.

The protein belongs to the pyruvate, phosphate/water dikinase regulatory protein family. PDRP subfamily.

The enzyme catalyses N(tele)-phospho-L-histidyl/L-threonyl-[pyruvate, phosphate dikinase] + ADP = N(tele)-phospho-L-histidyl/O-phospho-L-threonyl-[pyruvate, phosphate dikinase] + AMP + H(+). The catalysed reaction is N(tele)-phospho-L-histidyl/O-phospho-L-threonyl-[pyruvate, phosphate dikinase] + phosphate + H(+) = N(tele)-phospho-L-histidyl/L-threonyl-[pyruvate, phosphate dikinase] + diphosphate. Bifunctional serine/threonine kinase and phosphorylase involved in the regulation of the pyruvate, phosphate dikinase (PPDK) by catalyzing its phosphorylation/dephosphorylation. The sequence is that of Putative pyruvate, phosphate dikinase regulatory protein from Streptococcus agalactiae serotype Ia (strain ATCC 27591 / A909 / CDC SS700).